The following is a 902-amino-acid chain: Serine/threonine-protein kinase cbk1 (902 aa).

Disordered stretches follow at residues 1-22 (MSED…TCLK), 97-154 (ETHS…REDA), and 207-288 (QRMM…MVSP). The segment covering 97–118 (ETHSHSSDAEGTSHQDVSDRRN) has biased composition (basic and acidic residues). Over residues 125–134 (RPSSHSQADS) the composition is skewed to polar residues. 2 stretches are compositionally biased toward basic and acidic residues: residues 142–154 (QQKE…REDA) and 210–221 (MLDRGNPKRERS). A compositionally biased stretch (low complexity) spans 222–239 (SGSSTPSSKSSPVDSVST). Over residues 240–259 (APTSVSPGSLAPSGSTNNDP) the composition is skewed to polar residues. The span at 264–274 (KHIDSQADLPE) shows a compositional bias: basic and acidic residues. One can recognise a Protein kinase domain in the interval 378–732 (FEPLKILGRG…SPKYKQNDAI (355 aa)). ATP-binding positions include 384-392 (LGRGSFGVV) and K432. Catalysis depends on D527, which acts as the Proton acceptor. An AGC-kinase C-terminal domain is found at 771-831 (RGINWEQIHR…KWHPLGGKGG (61 aa)). A compositionally biased stretch (basic and acidic residues) spans 797 to 806 (YFDDGEHPSD). The interval 797–875 (YFDDGEHPSD…KKRLKEAKRA (79 aa)) is disordered. Residues 807–818 (REDDSSDSELDG) are compositionally biased toward acidic residues. Basic and acidic residues predominate over residues 833–843 (HKPDKPLKADV).

Belongs to the protein kinase superfamily. STE Ser/Thr protein kinase family. COT1 subfamily.

It carries out the reaction L-seryl-[protein] + ATP = O-phospho-L-seryl-[protein] + ADP + H(+). It catalyses the reaction L-threonyl-[protein] + ATP = O-phospho-L-threonyl-[protein] + ADP + H(+). Functionally, protein kinase that seems to play a role in the regulation of cell morphogenesis and proliferation. The sequence is that of Serine/threonine-protein kinase cbk1 (cbk1) from Emericella nidulans (strain FGSC A4 / ATCC 38163 / CBS 112.46 / NRRL 194 / M139) (Aspergillus nidulans).